The sequence spans 515 residues: Envelope glycoprotein (515 aa).

Residues 1–33 form the signal peptide; the sequence is MPKKRRSRRRPQPIIRWVSLTLTLLALCRPIQT. At 34 to 435 the chain is on the extracellular side; it reads WRCSLSLGNQ…LGLTAWVRET (402 aa). Asn129 and Asn203 each carry an N-linked (GlcNAc...) asparagine; by host glycan. Residues 212–215 carry the CXXC motif; sequence CAIC. 3 cysteine pairs are disulfide-bonded: Cys212–Cys215, Cys212–Cys392, and Cys384–Cys391. Asn230, Asn251, Asn256, Asn271, and Asn287 each carry an N-linked (GlcNAc...) asparagine; by host glycan. The segment at 304–324 is fusion peptide; the sequence is VAALTLGLALSVGLTGINVAV. 2 coiled-coil regions span residues 330-376 and 388-420; these read QRLT…WLYI and NEPC…DWQW. N-linked (GlcNAc...) asparagine; by host glycosylation occurs at Asn351. Positions 365–381 are immunosuppression; that stretch reads AQNRRGLDWLYIRLGFQ. Residues 384-392 carry the CX6CC motif; sequence CPTINEPCC. Asn398 carries an N-linked (GlcNAc...) asparagine; by host glycan. Residues 436–456 traverse the membrane as a helical segment; sequence IHSVLSLFLLALFLLFLAPCL. Cys455 carries S-palmitoyl cysteine; by host lipidation. At 457 to 515 the chain is on the cytoplasmic side; that stretch reads IKCLTSRLLKLLRQAPHFPEISLTPKPDSDYQALLPSAPEIYSHLSPVKPDYINLRPCP.

In terms of assembly, the mature envelope protein (Env) consists of a trimer of SU-TM heterodimers attached by a labile interchain disulfide bond. Post-translationally, specific enzymatic cleavages in vivo yield mature proteins. Envelope glycoproteins are synthesized as an inactive precursor that is N-glycosylated and processed likely by host cell furin or by a furin-like protease in the Golgi to yield the mature SU and TM proteins. The cleavage site between SU and TM requires the minimal sequence [KR]-X-[KR]-R. The CXXC motif is highly conserved across a broad range of retroviral envelope proteins. It is thought to participate in the formation of a labile disulfide bond possibly with the CX6CC motif present in the transmembrane protein. Isomerization of the intersubunit disulfide bond to an SU intrachain disulfide bond is thought to occur upon receptor recognition in order to allow membrane fusion. In terms of processing, the transmembrane protein is palmitoylated.

The protein localises to the virion membrane. The protein resides in the host cell membrane. In terms of biological role, the surface protein (SU) attaches the virus to the host cell by binding to its receptor. This interaction triggers the refolding of the transmembrane protein (TM) and is thought to activate its fusogenic potential by unmasking its fusion peptide. Fusion occurs at the host cell plasma membrane. The transmembrane protein (TM) acts as a class I viral fusion protein. Under the current model, the protein has at least 3 conformational states: pre-fusion native state, pre-hairpin intermediate state, and post-fusion hairpin state. During viral and target cell membrane fusion, the coiled coil regions (heptad repeats) assume a trimer-of-hairpins structure, positioning the fusion peptide in close proximity to the C-terminal region of the ectodomain. The formation of this structure appears to drive apposition and subsequent fusion of viral and target cell membranes. Membranes fusion leads to delivery of the nucleocapsid into the cytoplasm. The polypeptide is Envelope glycoprotein (env) (Bovine leukemia virus (isolate American FLK) (BLV)).